A 552-amino-acid chain; its full sequence is Metal transporter Nramp6.1 (552 aa).

A glycan (N-linked (GlcNAc...) asparagine) is linked at Asn11. A run of 7 helical transmembrane segments spans residues 55–75, 88–108, 133–155, 159–181, 189–209, 238–258, and 275–295; these read FLSY…PGNL, ELLW…SLAA, CLWL…GTAF, ILFN…LLLG, KLEL…FGEM, IALL…ALVL, and YFLI…LAVI. N-linked (GlcNAc...) asparagine glycosylation occurs at Asn306. A run of 5 helical transmembrane segments spans residues 338–358, 377–397, 402–422, 438–458, and 478–498; these read IYAI…TYAG, LVTR…GGSS, LIII…IPLL, IYII…NIYY, and VFIG…VIYL. A disordered region spans residues 511–552; it reads PNKNDPQQQTNMENGLAKSTEGPEMVDRAPYREDLADIPLPE. Residues 514–523 show a composition bias toward polar residues; it reads NDPQQQTNME. Residues 535 to 545 show a composition bias toward basic and acidic residues; it reads MVDRAPYREDL.

Belongs to the NRAMP (TC 2.A.55) family.

It is found in the membrane. Probable divalent metal transporter. The polypeptide is Metal transporter Nramp6.1 (Populus trichocarpa (Western balsam poplar)).